We begin with the raw amino-acid sequence, 112 residues long: Integration host factor subunit alpha (112 aa).

Belongs to the bacterial histone-like protein family. In terms of assembly, heterodimer of an alpha and a beta chain.

Its function is as follows. This protein is one of the two subunits of integration host factor, a specific DNA-binding protein that functions in genetic recombination as well as in transcriptional and translational control. This is Integration host factor subunit alpha from Rhizobium johnstonii (strain DSM 114642 / LMG 32736 / 3841) (Rhizobium leguminosarum bv. viciae).